The sequence spans 577 residues: Proline--tRNA ligase (577 aa).

The protein belongs to the class-II aminoacyl-tRNA synthetase family. ProS type 1 subfamily. Homodimer.

Its subcellular location is the cytoplasm. The enzyme catalyses tRNA(Pro) + L-proline + ATP = L-prolyl-tRNA(Pro) + AMP + diphosphate. Functionally, catalyzes the attachment of proline to tRNA(Pro) in a two-step reaction: proline is first activated by ATP to form Pro-AMP and then transferred to the acceptor end of tRNA(Pro). As ProRS can inadvertently accommodate and process non-cognate amino acids such as alanine and cysteine, to avoid such errors it has two additional distinct editing activities against alanine. One activity is designated as 'pretransfer' editing and involves the tRNA(Pro)-independent hydrolysis of activated Ala-AMP. The other activity is designated 'posttransfer' editing and involves deacylation of mischarged Ala-tRNA(Pro). The misacylated Cys-tRNA(Pro) is not edited by ProRS. The protein is Proline--tRNA ligase of Marinobacter nauticus (strain ATCC 700491 / DSM 11845 / VT8) (Marinobacter aquaeolei).